The chain runs to 260 residues: Exosome complex component Rrp42 (260 aa).

It belongs to the RNase PH family. Rrp42 subfamily. Component of the archaeal exosome complex. Forms a hexameric ring-like arrangement composed of 3 Rrp41-Rrp42 heterodimers. The hexameric ring associates with a trimer of Rrp4 and/or Csl4 subunits.

It is found in the cytoplasm. In terms of biological role, non-catalytic component of the exosome, which is a complex involved in RNA degradation. Contributes to the structuring of the Rrp41 active site. The protein is Exosome complex component Rrp42 of Thermoplasma acidophilum (strain ATCC 25905 / DSM 1728 / JCM 9062 / NBRC 15155 / AMRC-C165).